The primary structure comprises 249 residues: Basigin (249 aa).

The 82-residue stretch at 1-82 (AAGTIQTSVN…VGRSNIVVEG (82 aa)) folds into the Ig-like C2-type domain. The Extracellular portion of the chain corresponds to 1–187 (AAGTIQTSVN…MTLRVRSRLA (187 aa)). Intrachain disulfides connect C20–C66 and C105–C165. N23, N132, and N166 each carry an N-linked (GlcNAc...) asparagine glycan. Residues 84–179 (PRIKVGKKSE…TQGSVQEIMT (96 aa)) form the Ig-like V-type domain. A helical transmembrane segment spans residues 188–208 (ALWPFLGIVAEVLVLVTIIFI). Residues 209-249 (YEKRRKPDQTLDEDDPGAAPLKGSGHHMNDKDKNVRQRNAT) lie on the Cytoplasmic side of the membrane. The segment at 216 to 249 (DQTLDEDDPGAAPLKGSGHHMNDKDKNVRQRNAT) is disordered. T218 is modified (phosphothreonine). S232 is modified (phosphoserine).

As to quaternary structure, homooligomer. Interacts with VEGFA, KDR/VEGFR2, PPIA/CYPA, SLC16A12, SLC16A11, ATP1B2, MAG, L1CAM and AJAP1. Interacts with SLC16A3; interaction mediates SLC16A3 targeting to the plasma membrane. Interacts with SLC16A1; interaction mediates SLC16A1 targeting to the plasma membrane. Interacts with PPIL2; regulates BSG transport to the cell membrane. Interacts with XKR8; promoting its localization at the cell membrane. Interacts with SLC16A6; this interaction mediates targeting to the plasma membrane.

Its subcellular location is the cell membrane. The protein localises to the endoplasmic reticulum membrane. The protein resides in the basolateral cell membrane. In terms of biological role, signaling receptor for cyclophilins, essential for PPIA/CYPA and PPIB/CYPB-dependent signaling related to chemotaxis and adhesion of immune cells. Plays an important role in targeting the monocarboxylate transporters SLC16A1/GLUT1, SLC16A3, SLC16A8, SLC16A11 and SLC16A12 to the plasma membrane. Acts as a coreceptor for vascular endothelial growth factor receptor 2 (KDR/VEGFR2) in endothelial cells enhancing its VEGFA-mediated activation and downstream signaling. Promotes angiogenesis through EPAS1/HIF2A-mediated up-regulation of VEGFA and KDR/VEGFR2 in endothelial cells. The sequence is that of Basigin (BSG) from Cricetulus griseus (Chinese hamster).